The following is a 385-amino-acid chain: Transmembrane protein 271 (385 aa).

The next 2 membrane-spanning stretches (helical) occupy residues Cys9–Leu29 and Gly50–Leu70. Residues Glu83–Ala111 form a disordered region. Residues Leu121 to Ile141 form a helical membrane-spanning segment. Residues Pro160 to Ala203 are disordered. Low complexity predominate over residues Pro163–Arg197. A helical membrane pass occupies residues Val219–Val239. Residues Ser245–Glu305 are disordered. The span at Gln246–Gly258 shows a compositional bias: basic residues. Residues Arg259–Ser277 show a composition bias toward low complexity. Over residues Arg278 to Gln292 the composition is skewed to basic residues.

The protein localises to the membrane. The polypeptide is Transmembrane protein 271 (Homo sapiens (Human)).